The following is a 1092-amino-acid chain: Electroneutral sodium bicarbonate exchanger 1 (1092 aa).

3 disordered regions span residues 1–26, 55–95, and 243–263; these read MPAGSNEPDGVLSYQRPDEEAVVDQG, LGRQ…HDTP, and KKQSDPHSMDRDGQTVSPQSA. Topologically, residues 1 to 478 are extracellular; the sequence is MPAGSNEPDG…DYRDALSLQC (478 aa). Basic residues predominate over residues 58–76; sequence QSHRHHRTHGQKHRRRGGR. Basic and acidic residues predominate over residues 243-255; it reads KKQSDPHSMDRDG. A helical membrane pass occupies residues 479–499; it reads LASFLFLYCACMSPVITFGGL. The Cytoplasmic portion of the chain corresponds to 500–507; it reads LGEATEGR. The helical transmembrane segment at 508–528 threads the bilayer; the sequence is ISAIESLFGASMTGIAYSLFA. Residues 529–565 are Extracellular-facing; it reads GQPLTILGSTGPVLVFEKILFKFCKDYALSYLSLRAC. A helical transmembrane segment spans residues 566 to 586; that stretch reads IGLWTAFLCIVLVATDASSLV. The Cytoplasmic segment spans residues 587 to 595; the sequence is CYITRFTEE. The helical transmembrane segment at 596 to 616 threads the bilayer; that stretch reads AFASLICIIFIYEAIEKLIHL. The Extracellular segment spans residues 617-687; it reads AETYPIHMHS…EFIGSACGHH (71 aa). 2 disulfides stabilise this stretch: Cys-636/Cys-684 and Cys-638/Cys-672. N-linked (GlcNAc) asparagine glycosylation is found at Asn-646 and Asn-666. The helical transmembrane segment at 688-708 threads the bilayer; the sequence is GPYTPDVLFWSCILFFATFIV. The Cytoplasmic portion of the chain corresponds to 709–731; the sequence is SSTLKTFKTSRYFPTRVRSTVSD. A helical transmembrane segment spans residues 732-752; sequence FAVFLTIFTMVILDFLIGVPS. Topologically, residues 753 to 778 are extracellular; sequence PKLQVPSVFKPTRDDRGWFISPIGPN. A helical transmembrane segment spans residues 779–799; it reads PWWTVIAAIIPALLCTILIFM. The Cytoplasmic segment spans residues 800 to 824; that stretch reads DQQITAVIINRKEHKLKKGCGYHLD. Residues 825-845 form a helical membrane-spanning segment; that stretch reads LLVVAIMLGVCSLMGLPWFVA. The Extracellular segment spans residues 846 to 881; sequence ATVLSITHVNSLKLESECSAPGEQPKFLGIREQRVT. Residues 882-902 traverse the membrane as a helical segment; it reads GLMIFVLMGCSVFMTAVLKFI. At 903–904 the chain is on the cytoplasmic side; the sequence is PM. Residues 905 to 925 traverse the membrane as a helical segment; that stretch reads PVLYGVFLYMGVSSLQGIQFF. Over 926 to 962 the chain is Extracellular; it reads DRLKLFGMPAKHQPDFIYLRHVPLRKVHLFTLVQLTC. Residues 963-983 form a helical membrane-spanning segment; that stretch reads LVLLWVIKASPAAIVFPMMVL. The Cytoplasmic portion of the chain corresponds to 984 to 1092; sequence ALVFVRKVMD…GNTKEKSPFN (109 aa).

Belongs to the anion exchanger (TC 2.A.31) family. As to quaternary structure, homodimer. Expressed in the Purkinje cells and dendrites in the molecular layer of the cerebellum (at protein level). Expressed in the hippocampal neurons (at protein level). Strong expression observed in testis and moderate expression in kidney inner medulla, the submandibular gland, eye, cerebrum and cerebellum.

Its subcellular location is the cell membrane. The protein resides in the apical cell membrane. It localises to the basolateral cell membrane. It is found in the cytoplasmic vesicle. The protein localises to the secretory vesicle. Its subcellular location is the synaptic vesicle membrane. It carries out the reaction 2 hydrogencarbonate(out) + chloride(in) + Na(+)(out) = 2 hydrogencarbonate(in) + chloride(out) + Na(+)(in). Its function is as follows. Mediates electroneutral sodium- and carbonate-dependent chloride-HCO3(-) exchange with a Na(+):HCO3(-) stoichiometry of 2:1. Plays a major role in pH regulation in neurons. Mediates sodium reabsorption in the renal cortical collecting ducts. This chain is Electroneutral sodium bicarbonate exchanger 1, found in Rattus norvegicus (Rat).